The chain runs to 137 residues: Succinate dehydrogenase cytochrome b560 subunit (137 aa).

A run of 2 helical transmembrane segments spans residues 31-51 and 60-80; these read AFLATMVLFSILFFKIGDLSL and FFFLTFYLNWFIISLVNFTLL. H85 is a heme binding site. The helical transmembrane segment at 106 to 126 threads the bilayer; sequence VYTSGIIMLFCAAFLALLNII.

The protein belongs to the cytochrome b560 family. Forms part of complex II containing four subunits: a 70 kDa flavoprotein (FP), a 27 kDa iron-sulfur protein (IP), a cytochrome B and a membrane-anchoring protein. Requires heme as cofactor.

The protein localises to the mitochondrion inner membrane. It functions in the pathway carbohydrate metabolism; tricarboxylic acid cycle. Its function is as follows. Membrane-anchoring subunit of succinate dehydrogenase (SDH) that is involved in complex II of the mitochondrial electron transport chain and is responsible for transferring electrons from succinate to ubiquinone (coenzyme Q). The chain is Succinate dehydrogenase cytochrome b560 subunit (SDH3) from Marchantia polymorpha (Common liverwort).